A 415-amino-acid polypeptide reads, in one-letter code: L-cysteine:1D-myo-inositol 2-amino-2-deoxy-alpha-D-glucopyranoside ligase (415 aa).

The segment at 1-20 (MQSWSETAVPSVPGQGPPLR) is disordered. C43 serves as a coordination point for Zn(2+). L-cysteinyl-5'-AMP-binding positions include 43–46 (CGIT), T58, and 81–83 (NVT). Residues 45–55 (ITPYDATHLGH) carry the 'HIGH' region motif. The short motif at 187–192 (ERGGDP) is the 'ERGGDP' region element. W227 lines the L-cysteinyl-5'-AMP pocket. C231 is a Zn(2+) binding site. 249 to 251 (GSD) serves as a coordination point for L-cysteinyl-5'-AMP. Residue H256 participates in Zn(2+) binding. I283 is an L-cysteinyl-5'-AMP binding site. Positions 289–293 (KMSKS) match the 'KMSKS' region motif.

This sequence belongs to the class-I aminoacyl-tRNA synthetase family. MshC subfamily. As to quaternary structure, monomer. Zn(2+) serves as cofactor.

It catalyses the reaction 1D-myo-inositol 2-amino-2-deoxy-alpha-D-glucopyranoside + L-cysteine + ATP = 1D-myo-inositol 2-(L-cysteinylamino)-2-deoxy-alpha-D-glucopyranoside + AMP + diphosphate + H(+). In terms of biological role, catalyzes the ATP-dependent condensation of GlcN-Ins and L-cysteine to form L-Cys-GlcN-Ins. The protein is L-cysteine:1D-myo-inositol 2-amino-2-deoxy-alpha-D-glucopyranoside ligase of Rhodococcus jostii (strain RHA1).